Reading from the N-terminus, the 269-residue chain is Protein CURLY FLAG LEAF 1 (269 aa).

The interval 17-44 (SLNGGGGGGGGRRRGRRAAAAEGSDDSE) is disordered. Residues 47–52 (TVELNS) carry the EAR motif. Residues 54–88 (VALPYHWEQCLDIRTGQVYYINWEDGTRTTIDPRS) form the WW domain. Disordered regions lie at residues 83-133 (TIDP…SGYT) and 174-218 (GDDE…SGAG). Composition is skewed to low complexity over residues 87 to 106 (RSSS…SSSR), 121 to 133 (AAAA…SGYT), and 180 to 202 (SSSS…AVSS). Polar residues predominate over residues 203 to 212 (TLSSFSPTDE).

As to quaternary structure, binds to HDG1.

Functionally, negatively regulates the cuticle development probably by interacting with the HD-ZIP IV transcription factor HDG1. This Oryza sativa subsp. indica (Rice) protein is Protein CURLY FLAG LEAF 1.